We begin with the raw amino-acid sequence, 191 residues long: Protein NUCLEAR FUSION DEFECTIVE 2 (191 aa).

The signal sequence occupies residues 1-29 (MATLRFTLLLLVFVVGIFFSFSSVSHVRA). The 120-residue stretch at 48–167 (LAKLQTQIGY…IFGAIAIDAG (120 aa)) folds into the RNase III domain.

Its function is as follows. Required for karyogamy during female gametophyte development, when the two polar nuclei fuse to form the diploid central cell nucleus. This Arabidopsis thaliana (Mouse-ear cress) protein is Protein NUCLEAR FUSION DEFECTIVE 2.